The primary structure comprises 912 residues: Protein translocase subunit SecA (912 aa).

ATP contacts are provided by residues Gln87, 105 to 109, and Asp508; that span reads GEGKT. The tract at residues 865-912 is disordered; that stretch reads DEEAAQVQSGNAPVPVSQVTRDEPKVGRNDPCPCGSGKKYKHCHGQLS. Zn(2+) contacts are provided by Cys896, Cys898, Cys907, and His908. The segment covering 902 to 912 has biased composition (basic residues); sequence KKYKHCHGQLS.

This sequence belongs to the SecA family. In terms of assembly, monomer and homodimer. Part of the essential Sec protein translocation apparatus which comprises SecA, SecYEG and auxiliary proteins SecDF-YajC and YidC. Zn(2+) serves as cofactor.

The protein resides in the cell inner membrane. It is found in the cytoplasm. It carries out the reaction ATP + H2O + cellular proteinSide 1 = ADP + phosphate + cellular proteinSide 2.. In terms of biological role, part of the Sec protein translocase complex. Interacts with the SecYEG preprotein conducting channel. Has a central role in coupling the hydrolysis of ATP to the transfer of proteins into and across the cell membrane, serving both as a receptor for the preprotein-SecB complex and as an ATP-driven molecular motor driving the stepwise translocation of polypeptide chains across the membrane. This Xanthomonas oryzae pv. oryzae (strain MAFF 311018) protein is Protein translocase subunit SecA.